The sequence spans 356 residues: Histidinol-phosphate aminotransferase (356 aa).

At lysine 214 the chain carries N6-(pyridoxal phosphate)lysine.

It belongs to the class-II pyridoxal-phosphate-dependent aminotransferase family. Histidinol-phosphate aminotransferase subfamily. As to quaternary structure, homodimer. It depends on pyridoxal 5'-phosphate as a cofactor.

The catalysed reaction is L-histidinol phosphate + 2-oxoglutarate = 3-(imidazol-4-yl)-2-oxopropyl phosphate + L-glutamate. It functions in the pathway amino-acid biosynthesis; L-histidine biosynthesis; L-histidine from 5-phospho-alpha-D-ribose 1-diphosphate: step 7/9. In Escherichia coli (strain SMS-3-5 / SECEC), this protein is Histidinol-phosphate aminotransferase.